The following is an 849-amino-acid chain: Lysine-specific histone demethylase 1 homolog 1 (849 aa).

The tract at residues 1–118 (MEEGSEAQPP…RRRRKKQFPG (118 aa)) is disordered. Low complexity-rich tracts occupy residues 34–67 (GQAAAAEAMEGEAEGAAAAAGTIEGEAGYAAADA) and 89–103 (PTSSAPSATAAVDDS). Residues 106 to 115 (ARKRRRRKKQ) are compositionally biased toward basic residues. One can recognise an SWIRM domain in the interval 159–260 (ARELDAEALI…FGLAPSVISL (102 aa)). The FAD site is built by Glu300, Arg302, Arg308, and Glu688.

This sequence belongs to the flavin monoamine oxidase family. The cofactor is FAD.

Its function is as follows. Probable histone demethylase. This Oryza sativa subsp. japonica (Rice) protein is Lysine-specific histone demethylase 1 homolog 1.